The following is a 343-amino-acid chain: RNA-binding protein 43 (343 aa).

One can recognise an RRM domain in the interval 15–90; the sequence is RTVVVSGLPV…PRLTVSHFSE (76 aa).

This Mus musculus (Mouse) protein is RNA-binding protein 43 (Rbm43).